Consider the following 114-residue polypeptide: Pro-FMRFamide-related neuropeptide FF (114 aa).

An N-terminal signal peptide occupies residues 1–21 (MDSKWAALLLLLLLLLNWGHT). A propeptide spanning residues 22–69 (EEAGSWGEDQVFAGEDKGPHPPQYAHIPDRIQTPGSLFRVLLQAMDTP) is cleaved from the precursor. Phe-82 is subject to Phenylalanine amide. The propeptide occupies 85 to 100 (SAWGSWSKEQLNPQAR). Phe-111 is modified (phenylalanine amide).

The protein belongs to the FARP (FMRFamide related peptide) family.

It is found in the secreted. Its function is as follows. Morphine modulating peptides. Have wide-ranging physiologic effects, including the modulation of morphine-induced analgesia, elevation of arterial blood pressure, and increased somatostatin secretion from the pancreas. Neuropeptide FF potentiates and sensitizes ASIC1 and ASIC3 channels. This is Pro-FMRFamide-related neuropeptide FF (Npff) from Mus musculus (Mouse).